Reading from the N-terminus, the 360-residue chain is MPTILVSALETSSNVHLEELRRNLPKDYRFIGVFEGSGALYSPREFSVMGFRDVIGRLGFLFKVYKEMIQLAKQADMVLLMDSSSFNIPLAKKIKKQDSHKKIMYYILPQVWAWKKWRAKTLEKYCDFLGAILPFEVSYYQKKAQYVGHPLLDEIKYYKKDIKGETLVFMPGSRKSEIAKIFPLFVEVARILEQNEGFKRRVLVVPSFFKGLDLKALYGEGIEWFEISYDAHKSLFEAEFAFICSGTATLEAALIGTPFVLAYRAKTMDFLIARMFVNLHYIGLANIFYNALNDETPGLGESQLHPELIQHFLSVESLIRAYKDMDRERYFKESLKLREYLMHGSARKIASEIAFLLNLT.

It belongs to the LpxB family.

It carries out the reaction a lipid X + a UDP-2-N,3-O-bis[(3R)-3-hydroxyacyl]-alpha-D-glucosamine = a lipid A disaccharide + UDP + H(+). The protein operates within bacterial outer membrane biogenesis; LPS lipid A biosynthesis. Its function is as follows. Condensation of UDP-2,3-diacylglucosamine and 2,3-diacylglucosamine-1-phosphate to form lipid A disaccharide, a precursor of lipid A, a phosphorylated glycolipid that anchors the lipopolysaccharide to the outer membrane of the cell. The protein is Lipid-A-disaccharide synthase of Helicobacter acinonychis (strain Sheeba).